A 297-amino-acid chain; its full sequence is N-acetylmuramic acid 6-phosphate etherase (297 aa).

The SIS domain maps to 55–218 (AAAALKSGGR…STGAMVKFGK (164 aa)). Glu83 (proton donor) is an active-site residue. The active site involves Glu114.

This sequence belongs to the GCKR-like family. MurNAc-6-P etherase subfamily. In terms of assembly, homodimer.

It catalyses the reaction N-acetyl-D-muramate 6-phosphate + H2O = N-acetyl-D-glucosamine 6-phosphate + (R)-lactate. The protein operates within amino-sugar metabolism; 1,6-anhydro-N-acetylmuramate degradation. It functions in the pathway amino-sugar metabolism; N-acetylmuramate degradation. Its pathway is cell wall biogenesis; peptidoglycan recycling. Functionally, specifically catalyzes the cleavage of the D-lactyl ether substituent of MurNAc 6-phosphate, producing GlcNAc 6-phosphate and D-lactate. Together with AnmK, is also required for the utilization of anhydro-N-acetylmuramic acid (anhMurNAc) either imported from the medium or derived from its own cell wall murein, and thus plays a role in cell wall recycling. In Salmonella agona (strain SL483), this protein is N-acetylmuramic acid 6-phosphate etherase.